Here is a 210-residue protein sequence, read N- to C-terminus: MSNPMKTALSLVPMVIEQTNRGERAYDIFSRLLKERIIFINGPVEDSMAMLVCAQLLFLEAENPKKEISLYINSPGGVVTSGMAIYDTMQFIRPPVSTLCMGQAASMGSLLLTAGAKGHRFTLPNARIMVHQPSGGFQGQASDIERHAQDIIKMKRRLNEIYVQHTGQDYEVIERTLDRDHFMTAEEAKQFGLVDDVIQYRAETEKEEKD.

Residue Ser106 is the Nucleophile of the active site. Residue His131 is part of the active site.

This sequence belongs to the peptidase S14 family. Fourteen ClpP subunits assemble into 2 heptameric rings which stack back to back to give a disk-like structure with a central cavity, resembling the structure of eukaryotic proteasomes.

It is found in the cytoplasm. The catalysed reaction is Hydrolysis of proteins to small peptides in the presence of ATP and magnesium. alpha-casein is the usual test substrate. In the absence of ATP, only oligopeptides shorter than five residues are hydrolyzed (such as succinyl-Leu-Tyr-|-NHMec, and Leu-Tyr-Leu-|-Tyr-Trp, in which cleavage of the -Tyr-|-Leu- and -Tyr-|-Trp bonds also occurs).. Functionally, cleaves peptides in various proteins in a process that requires ATP hydrolysis. Has a chymotrypsin-like activity. Plays a major role in the degradation of misfolded proteins. This is ATP-dependent Clp protease proteolytic subunit from Bartonella quintana (strain Toulouse) (Rochalimaea quintana).